The primary structure comprises 651 residues: Chaperone protein HtpG (651 aa).

The tract at residues 1–353 (MAPHVEQLEF…AQDMSLNVSR (353 aa)) is a; substrate-binding. The interval 354–569 (EILQQDRQIR…TFGITPALAR (216 aa)) is b. The c stretch occupies residues 570 to 651 (MYRASGQPVP…RLTRMVGEQS (82 aa)).

Belongs to the heat shock protein 90 family. As to quaternary structure, homodimer.

The protein localises to the cytoplasm. In terms of biological role, molecular chaperone. Has ATPase activity. The sequence is that of Chaperone protein HtpG from Mycolicibacterium gilvum (strain PYR-GCK) (Mycobacterium gilvum (strain PYR-GCK)).